A 313-amino-acid chain; its full sequence is GTP cyclohydrolase MptA (313 aa).

The protein belongs to the GTP cyclohydrolase IV family. In terms of assembly, homodimer. Fe(2+) serves as cofactor.

It catalyses the reaction GTP + H2O = 7,8-dihydroneopterin 2',3'-cyclic phosphate + formate + diphosphate + H(+). It functions in the pathway cofactor biosynthesis; 5,6,7,8-tetrahydromethanopterin biosynthesis. Its function is as follows. Converts GTP to 7,8-dihydro-D-neopterin 2',3'-cyclic phosphate, the first intermediate in the biosynthesis of coenzyme methanopterin. This chain is GTP cyclohydrolase MptA, found in Methanoculleus marisnigri (strain ATCC 35101 / DSM 1498 / JR1).